Here is a 432-residue protein sequence, read N- to C-terminus: Gamma-glutamyl phosphate reductase (432 aa).

This sequence belongs to the gamma-glutamyl phosphate reductase family.

Its subcellular location is the cytoplasm. The enzyme catalyses L-glutamate 5-semialdehyde + phosphate + NADP(+) = L-glutamyl 5-phosphate + NADPH + H(+). Its pathway is amino-acid biosynthesis; L-proline biosynthesis; L-glutamate 5-semialdehyde from L-glutamate: step 2/2. Catalyzes the NADPH-dependent reduction of L-glutamate 5-phosphate into L-glutamate 5-semialdehyde and phosphate. The product spontaneously undergoes cyclization to form 1-pyrroline-5-carboxylate. The chain is Gamma-glutamyl phosphate reductase from Methylobacterium radiotolerans (strain ATCC 27329 / DSM 1819 / JCM 2831 / NBRC 15690 / NCIMB 10815 / 0-1).